A 365-amino-acid chain; its full sequence is Zinc finger MYND domain-containing protein 12 (365 aa).

Zn(2+)-binding residues include Cys-17, Cys-20, Cys-28, Cys-31, Cys-37, His-41, His-50, and Cys-54. Residues 17–54 (CEVCEAPAERVCAACTVTYYCGVVHQKADWDSIHEKIC) form an MYND-type; atypical zinc finger. TPR repeat units lie at residues 172 to 205 (SLLH…ASCA) and 214 to 247 (SGGY…WHAY).

Expressed predominantly in the testis.

Its subcellular location is the cell projection. It localises to the cilium. The protein localises to the flagellum. Its function is as follows. Required for sperm flagellum function and male fertility. The chain is Zinc finger MYND domain-containing protein 12 (ZMYND12) from Homo sapiens (Human).